Reading from the N-terminus, the 1200-residue chain is Chromosome partition protein Smc (1200 aa).

32–39 (PNGCGKSN) is a binding site for ATP. Coiled-coil stretches lie at residues 171 to 219 (VTKY…AEKY) and 252 to 342 (LENL…MSEA). The SMC hinge domain occupies 528-644 (QGIFGLVADV…QDVATARAWT (117 aa)). Coiled-coil stretches lie at residues 679–706 (ALQK…ILTR) and 735–762 (LASQ…LEVE). Residues 763–795 (EGQLTQSHQALEHEEEASRGEVAHGQADREGRE) form a disordered region. Positions 772-795 (ALEHEEEASRGEVAHGQADREGRE) are enriched in basic and acidic residues. Positions 1002-1039 (HAELSKRYDFLTAQKKDLQSSIEQLKEAIQRIDATSRE) form a coiled coil.

This sequence belongs to the SMC family. In terms of assembly, homodimer. Probably forms the Structural Maintenance of Chromosome (SMC) condensin-like complex with ScpA and ScpB.

It localises to the cytoplasm. A conditionally essential component of the chromosome segregation machinery. Required for chromosome condensation and partitioning. Important for positioning of ParB-parS complexes (ori of replication) and of the ter replication site, as well as for segration of the ParB-parS complex and thus chromosome segregation. May act via the formation of a condensin-like complex containing Smc, ScpA and ScpB that pulls DNA away from mid-cell into both cell halves. This is Chromosome partition protein Smc from Myxococcus xanthus (strain DK1622).